The sequence spans 277 residues: Undecaprenyl-diphosphatase (277 aa).

5 consecutive transmembrane segments (helical) span residues 85–105, 109–129, 188–208, 218–238, and 256–276; these read VNIV…AGAI, LFAP…ILWV, ATEF…VYSV, ADIP…FLCV, and YRIG…VVWA.

The protein belongs to the UppP family.

Its subcellular location is the cell inner membrane. It catalyses the reaction di-trans,octa-cis-undecaprenyl diphosphate + H2O = di-trans,octa-cis-undecaprenyl phosphate + phosphate + H(+). Its function is as follows. Catalyzes the dephosphorylation of undecaprenyl diphosphate (UPP). Confers resistance to bacitracin. In Herminiimonas arsenicoxydans, this protein is Undecaprenyl-diphosphatase.